The primary structure comprises 387 residues: 4-hydroxy-3-methylbut-2-en-1-yl diphosphate synthase (flavodoxin) (387 aa).

Residues cysteine 293, cysteine 296, cysteine 328, and glutamate 335 each contribute to the [4Fe-4S] cluster site.

Belongs to the IspG family. [4Fe-4S] cluster serves as cofactor.

The catalysed reaction is (2E)-4-hydroxy-3-methylbut-2-enyl diphosphate + oxidized [flavodoxin] + H2O + 2 H(+) = 2-C-methyl-D-erythritol 2,4-cyclic diphosphate + reduced [flavodoxin]. It participates in isoprenoid biosynthesis; isopentenyl diphosphate biosynthesis via DXP pathway; isopentenyl diphosphate from 1-deoxy-D-xylulose 5-phosphate: step 5/6. Its function is as follows. Converts 2C-methyl-D-erythritol 2,4-cyclodiphosphate (ME-2,4cPP) into 1-hydroxy-2-methyl-2-(E)-butenyl 4-diphosphate. This is 4-hydroxy-3-methylbut-2-en-1-yl diphosphate synthase (flavodoxin) from Treponema denticola (strain ATCC 35405 / DSM 14222 / CIP 103919 / JCM 8153 / KCTC 15104).